A 699-amino-acid chain; its full sequence is Glycine--tRNA ligase beta subunit (699 aa).

This sequence belongs to the class-II aminoacyl-tRNA synthetase family. In terms of assembly, tetramer of two alpha and two beta subunits.

It is found in the cytoplasm. The catalysed reaction is tRNA(Gly) + glycine + ATP = glycyl-tRNA(Gly) + AMP + diphosphate. The chain is Glycine--tRNA ligase beta subunit from Bradyrhizobium diazoefficiens (strain JCM 10833 / BCRC 13528 / IAM 13628 / NBRC 14792 / USDA 110).